The primary structure comprises 347 residues: MLKKSDFHYDLPEELIAQGPLPERSASRLMLVPSAPEQFQDCYVRDLPELLQPGDLLVFNDTRVIPARLFGRKVSGGRVEVLIERFLGTHQAVVQLRTSRSLKVGNRILLDAGGHAEVLGRDGEFYLLSFDVESPLEQWLSDVGQLPLPPYIHREPDEYDRERYQTVFARAVGAVAAPTAGLHFDESLLARLRARGVEFGYITLHVGAGTFQPVRVALLQEHVMHSEWFKVGAELVEQVRSARARGGRVIAVGTTVVRSLESAMRHGELQPFVGETQIFIFPGYCIRSVDAMVTNFHLPESTLLMLVAAFAGRTRILDAYYHAVQQRYRFFSYGDAMLLFPRNAGEQ.

This sequence belongs to the QueA family. Monomer.

It localises to the cytoplasm. It carries out the reaction 7-aminomethyl-7-carbaguanosine(34) in tRNA + S-adenosyl-L-methionine = epoxyqueuosine(34) in tRNA + adenine + L-methionine + 2 H(+). The protein operates within tRNA modification; tRNA-queuosine biosynthesis. In terms of biological role, transfers and isomerizes the ribose moiety from AdoMet to the 7-aminomethyl group of 7-deazaguanine (preQ1-tRNA) to give epoxyqueuosine (oQ-tRNA). This Xylella fastidiosa (strain M12) protein is S-adenosylmethionine:tRNA ribosyltransferase-isomerase.